A 689-amino-acid polypeptide reads, in one-letter code: Armadillo-like helical domain-containing protein 3 (689 aa).

The helical transmembrane segment at 520-538 threads the bilayer; sequence IFTLALMIVNLFNMFITYG.

The protein belongs to the ARMH3 family. As to quaternary structure, interacts with PI4KB. Interacts with GBF1.

It is found in the golgi apparatus membrane. It localises to the cytoplasm. In terms of biological role, involved in GBF1 recruitment, Golgi maintenance and protein secretion. In Homo sapiens (Human), this protein is Armadillo-like helical domain-containing protein 3.